The primary structure comprises 354 residues: Interferon-inducible protein AIM2 (354 aa).

The region spanning 1–87 (MESEYREMLL…ANALEEKKKE (87 aa)) is the Pyrin domain. The interval 95–124 (NTKKRGTQKVENRSQAENCSAASATRSDND) is disordered. The span at 109 to 120 (QAENCSAASATR) shows a compositional bias: polar residues. The 198-residue stretch at 144–341 (MVAEQEAIRE…SGPCSFFKVI (198 aa)) folds into the HIN-200 domain.

The protein belongs to the HIN-200 family. In terms of assembly, self-associates; forms homooligomers in response to cytosolic double-stranded DNA (dsDNA) and the dsDNA seems to serve as oligomerization platform. Component of AIM2 inflammasome, which consists of a signal sensor component (AIM2), an adapter (PYCARD/ASC), which recruits an effector pro-inflammatory caspase (CASP1). Interacts (via pyrin domain) with PYCARD/ASC (via pyrin domain); interaction is direct. Component of the AIM2 PANoptosome complex, a multiprotein complex that drives inflammatory cell death (PANoptosis). Interacts with EIF2AK2/PKR. Interacts with MAPRE1. Interacts (via HIN-200 domain) with IFI202 (via HIN-200 domain 2); preventing activation of the AIM2 inflammasome. Interacts with RACK1; promoting association with PP2A phosphatase and dephosphorylation of AKT1. Interacts with TRIM11; promoting AIM2 recruitment to autophagosomes and autophagy-dependent degradation. In terms of processing, degraded via selective autophagy following interaction with TRIM11. Expressed in developing neurons. Highly expressed in regulatory T-cells (Treg).

It localises to the cytoplasm. The protein resides in the inflammasome. The protein localises to the nucleus. Inactive in absence of double-stranded DNA (dsDNA). Homooligomerizes upon binding to dsDNA, dsDNA serving as an oligomerization platform. AIM2 requires large dsDNA to generate a structural template that couples dsDNA ligand-binding and homooligomerization. Homooligomerization is followed by recruitment of PYCARD/ASC to initiate speck formation (nucleation). AIM2 and PYCARD/ASC homooligomer filaments assemble bidirectionally and the recognition between AIM2 and PYCARD/ASC oligomers occurs in a head-to-tail manner. Clustered PYCARD/ASC nucleates the formation of CASP1 filaments through the interaction of their respective CARD domains, acting as a platform for CASP1 polymerization and activation. Active CASP1 then specifically processes protein precursors, such as gasdermin-D (GSDMD), IL1B and IL18, leading to the release of mature cytokines in the extracellular milieu or pyroptosis, depending on cell type. AIM2 can be activated in response to events that cause genomic DNA (HIV protease inhibitor nelfinavir) or mitochondrial DNA release in the cytoplasm (such as Perfluoroalkyl substance pollutants or cholesterol overload). Activation of the AIM2 inflammasome is inhibited by IFI202. Activation of the AIM2 inflammasome is inhibited by TRIM11, which promotes autophagy-dependent degradation of AIM2. Functionally, sensor component of the AIM2 inflammasome, which mediates inflammasome activation in response to the presence of double-stranded DNA (dsDNA) in the cytosol, leading to subsequent pyroptosis. Inflammasomes are supramolecular complexes that assemble in the cytosol in response to pathogens and other damage-associated signals and play critical roles in innate immunity and inflammation. Acts as a recognition receptor (PRR): specifically recognizes and binds dsDNA in the cytosol, and mediates the formation of the inflammasome polymeric complex composed of AIM2, CASP1 and PYCARD/ASC. Recruitment of pro-caspase-1 (proCASP1) to the AIM2 inflammasome promotes caspase-1 (CASP1) activation, which subsequently cleaves and activates inflammatory cytokines IL1B and IL18 and gasdermin-D (GSDMD), promoting cytokine secretion. In some cells, CASP1 activation mediates cleavage and activation of GSDMD, triggering pyroptosis without promoting cytokine secretion. Detects cytosolic dsDNA of viral and bacterial origin in a non-sequence-specific manner. Involved in the DNA damage response caused by acute ionizing radiation by mediating pyroptosis of intestinal epithelial cells and bone marrow cells in response to double-strand DNA breaks. Mechanistically, AIM2 senses DNA damage in the nucleus to mediate inflammasome assembly and inflammatory cell death. Also acts as a regulator of neurodevelopment via its role in the DNA damage response: acts by promoting neural cell death in response to DNA damage in the developing brain, thereby purging genetically compromised cells of the central nervous system. Pyroptosis mediated by the AIM2 inflammasome in response to DNA damage is dependent on GSDMD without involving IL1B and IL18 cytokine secretion. Also acts as a mediator of pyroptosis, necroptosis and apoptosis (PANoptosis), an integral part of host defense against pathogens, in response to bacterial infection. Can also trigger PYCARD/ASC-dependent, caspase-1-independent cell death that involves caspase-8 (CASP8). Its function is as follows. Also acts as a tumor suppressor independently of its role in inflammatory response. Able to suppress overt cell proliferation in enterocytes: restricts stem cell proliferation in the intestinal mucosa in an inflammasome-independent manner, contributing to a decrease in the likelihood of colorectal cancer development. AIM2 suppresses cell proliferation by inhibiting phosphorylation of AKT1 at 'Ser-473', preventing AKT1 activation and AKT-mTOR signaling pathway. Inhibits AKT1 phosphorylation both by inhibiting the activity of PRKDC/DNA-PK kinase and promoting dephosphorylation by PP2A phosphatase. Also acts as a key regulator of regulatory T-cells (Treg) homeostasis by promoting their stability: acts by preventing AKT1 activation. Its role in Treg homeostasis is important to restain autoimmune diseases. This Mus musculus (Mouse) protein is Interferon-inducible protein AIM2.